The primary structure comprises 361 residues: Phospho-N-acetylmuramoyl-pentapeptide-transferase (361 aa).

The next 10 helical transmembrane spans lie at 25 to 45 (RGILAALTALFLSLWMGPAVI), 73 to 93 (TMGGSLILLTVTLSVLLWGDL), 98 to 118 (VWLVLAVMICFGAIGWYDDWI), 139 to 159 (IFGLAAGLFLYYTADVPAAIT), 168 to 188 (IALPLAGVSFVVIAYFWIVGF), 200 to 220 (GLAIMPTVLVACALGVFAYAS), 237 to 257 (AGELIIICSAIAGAGLGFLWF), 264 to 284 (VFMGDIGALSLGAVLGTVAVI), 289 to 309 (LVLVIMGGVFVIETLSVMIQV), and 339 to 359 (VIVRFWIISVVLVLIGLATLK).

It belongs to the glycosyltransferase 4 family. MraY subfamily. Mg(2+) serves as cofactor.

It localises to the cell inner membrane. The enzyme catalyses UDP-N-acetyl-alpha-D-muramoyl-L-alanyl-gamma-D-glutamyl-meso-2,6-diaminopimeloyl-D-alanyl-D-alanine + di-trans,octa-cis-undecaprenyl phosphate = di-trans,octa-cis-undecaprenyl diphospho-N-acetyl-alpha-D-muramoyl-L-alanyl-D-glutamyl-meso-2,6-diaminopimeloyl-D-alanyl-D-alanine + UMP. It participates in cell wall biogenesis; peptidoglycan biosynthesis. In terms of biological role, catalyzes the initial step of the lipid cycle reactions in the biosynthesis of the cell wall peptidoglycan: transfers peptidoglycan precursor phospho-MurNAc-pentapeptide from UDP-MurNAc-pentapeptide onto the lipid carrier undecaprenyl phosphate, yielding undecaprenyl-pyrophosphoryl-MurNAc-pentapeptide, known as lipid I. This is Phospho-N-acetylmuramoyl-pentapeptide-transferase from Xanthomonas campestris pv. campestris (strain 8004).